The sequence spans 127 residues: Large ribosomal subunit protein bL20 (127 aa).

This sequence belongs to the bacterial ribosomal protein bL20 family.

In terms of biological role, binds directly to 23S ribosomal RNA and is necessary for the in vitro assembly process of the 50S ribosomal subunit. It is not involved in the protein synthesizing functions of that subunit. The chain is Large ribosomal subunit protein bL20 from Bifidobacterium longum (strain DJO10A).